The following is a 359-amino-acid chain: Protein RecA (359 aa).

77-84 lines the ATP pocket; the sequence is GPESSGKT.

The protein belongs to the RecA family.

It is found in the cytoplasm. Can catalyze the hydrolysis of ATP in the presence of single-stranded DNA, the ATP-dependent uptake of single-stranded DNA by duplex DNA, and the ATP-dependent hybridization of homologous single-stranded DNAs. It interacts with LexA causing its activation and leading to its autocatalytic cleavage. In Azospirillum lipoferum (strain 4B), this protein is Protein RecA.